A 136-amino-acid chain; its full sequence is Large-conductance mechanosensitive channel (136 aa).

The next 2 helical transmembrane spans lie at 9–29 and 79–99; these read AFAS…GAAF and IQTI…VKAI.

The protein belongs to the MscL family. In terms of assembly, homopentamer.

It is found in the cell inner membrane. In terms of biological role, channel that opens in response to stretch forces in the membrane lipid bilayer. May participate in the regulation of osmotic pressure changes within the cell. In Shewanella baltica (strain OS223), this protein is Large-conductance mechanosensitive channel.